The following is a 32-amino-acid chain: Defensin-3 (32 aa).

Cystine bridges form between C3/C31, C5/C20, and C10/C30.

It is found in the secreted. Its function is as follows. Has antibacterial activity against the Gram-negative bacterium E.coli and the Gram-positive bacteria L.monocytogenes and S.aureus. Has antifungal activity against C.albicans. This is Defensin-3 from Papio hamadryas (Hamadryas baboon).